We begin with the raw amino-acid sequence, 616 residues long: Dihydroxy-acid dehydratase (616 aa).

Asp81 provides a ligand contact to Mg(2+). Position 122 (Cys122) interacts with [2Fe-2S] cluster. Residues Asp123 and Lys124 each contribute to the Mg(2+) site. Lys124 is subject to N6-carboxylysine. Cys195 provides a ligand contact to [2Fe-2S] cluster. Residue Glu491 participates in Mg(2+) binding. The active-site Proton acceptor is Ser517.

The protein belongs to the IlvD/Edd family. As to quaternary structure, homodimer. The cofactor is [2Fe-2S] cluster. It depends on Mg(2+) as a cofactor.

It catalyses the reaction (2R)-2,3-dihydroxy-3-methylbutanoate = 3-methyl-2-oxobutanoate + H2O. The catalysed reaction is (2R,3R)-2,3-dihydroxy-3-methylpentanoate = (S)-3-methyl-2-oxopentanoate + H2O. It participates in amino-acid biosynthesis; L-isoleucine biosynthesis; L-isoleucine from 2-oxobutanoate: step 3/4. Its pathway is amino-acid biosynthesis; L-valine biosynthesis; L-valine from pyruvate: step 3/4. Functions in the biosynthesis of branched-chain amino acids. Catalyzes the dehydration of (2R,3R)-2,3-dihydroxy-3-methylpentanoate (2,3-dihydroxy-3-methylvalerate) into 2-oxo-3-methylpentanoate (2-oxo-3-methylvalerate) and of (2R)-2,3-dihydroxy-3-methylbutanoate (2,3-dihydroxyisovalerate) into 2-oxo-3-methylbutanoate (2-oxoisovalerate), the penultimate precursor to L-isoleucine and L-valine, respectively. This is Dihydroxy-acid dehydratase from Yersinia pseudotuberculosis serotype O:1b (strain IP 31758).